A 387-amino-acid chain; its full sequence is Colicin-N (387 aa).

A compositionally biased stretch (polar residues) spans 1–11 (MGSNGADNAHN). Positions 1–106 (MGSNGADNAH…ITITPDNSKP (106 aa)) are disordered. Residues 14–30 (FGGGKNPGIGNTSGAGS) are compositionally biased toward gly residues. Residues 31–48 (NGSASSNRGNSNGWSWSN) show a composition bias toward low complexity. The span at 78 to 87 (GNSGNRGNNG) shows a compositional bias: gly residues. 2 consecutive transmembrane segments (helical) span residues 325 to 345 (IIGG…LSFL) and 350 to 370 (LAVT…SSFI).

It belongs to the channel forming colicin family.

The protein localises to the cell membrane. In terms of biological role, this colicin is a channel-forming colicin. This class of transmembrane toxins depolarize the cytoplasmic membrane, leading to dissipation of cellular energy. Its function is as follows. Colicins are polypeptide toxins produced by and active against E.coli and closely related bacteria. This Escherichia coli protein is Colicin-N (cna).